The chain runs to 456 residues: Protein FAM124B (456 aa).

Positions 262–313 are disordered; the sequence is NGCLRGDTHPQDSSLNSVSTQRTLEPRSRRRSRSRRFKVHSLELPQPSGSWE. Residues 272-284 show a composition bias toward polar residues; the sequence is QDSSLNSVSTQRT. The span at 289–300 shows a compositional bias: basic residues; that stretch reads SRRRSRSRRFKV.

It belongs to the FAM124 family. As to quaternary structure, interacts with CHD7 and CHD8. Expressed strongly in lung, at slightly lower levels in heart, kidney, brain and testis, and weakly in liver (at protein level). In brain, highly expressed in cortex, hippocampus, dentate gyrus, caudate putamen and cerebellum (at protein level).

The protein resides in the nucleus. The chain is Protein FAM124B (Fam124b) from Mus musculus (Mouse).